Reading from the N-terminus, the 313-residue chain is tRNA dimethylallyltransferase (313 aa).

17–24 serves as a coordination point for ATP; sequence GPTASGKT. Position 19–24 (19–24) interacts with substrate; it reads TASGKT. Interaction with substrate tRNA regions lie at residues 42-45, 166-170, 247-252, and 280-287; these read DSAL, QRLSR, RCVGYR, and KRQITWLR.

This sequence belongs to the IPP transferase family. Monomer. It depends on Mg(2+) as a cofactor.

The enzyme catalyses adenosine(37) in tRNA + dimethylallyl diphosphate = N(6)-dimethylallyladenosine(37) in tRNA + diphosphate. Catalyzes the transfer of a dimethylallyl group onto the adenine at position 37 in tRNAs that read codons beginning with uridine, leading to the formation of N6-(dimethylallyl)adenosine (i(6)A). In Photorhabdus laumondii subsp. laumondii (strain DSM 15139 / CIP 105565 / TT01) (Photorhabdus luminescens subsp. laumondii), this protein is tRNA dimethylallyltransferase.